A 318-amino-acid chain; its full sequence is MEKYDLAIIGAGPIGLFAASFANLHGLKTISFDALDEIGGQINMLYPQKNIKDIPAFPSIKGKKLVSQLLEQNINTKFILSHKVKEISFLENENILVDKKYEVKSLLIATGLGAFKPKTLPLSTTLDVNQHIHYSMQHPEIFANKKVAILGGGDSALDWALELANTSDVFLIHRRNEFRGLESSVNKLKSLKNVELLTPYLPKDLQLNNNRMELVLHKVGASQDFVTKNVDEILVAYGFKSDNRQLRKWGIKLDHNLIAVSQKMHTNLPHVYAIGDAITYPGRVPMIALGFGEAQIAISNIMQDLFPEKTMTFHSTSI.

FAD is bound by residues aspartate 33, glutamine 41, tyrosine 46, valine 84, phenylalanine 115, aspartate 276, and threonine 316.

This sequence belongs to the ferredoxin--NADP reductase type 2 family. Homodimer. The cofactor is FAD.

It carries out the reaction 2 reduced [2Fe-2S]-[ferredoxin] + NADP(+) + H(+) = 2 oxidized [2Fe-2S]-[ferredoxin] + NADPH. The polypeptide is Ferredoxin--NADP reductase (Lactobacillus gasseri (strain ATCC 33323 / DSM 20243 / BCRC 14619 / CIP 102991 / JCM 1131 / KCTC 3163 / NCIMB 11718 / NCTC 13722 / AM63)).